A 119-amino-acid chain; its full sequence is Holo-[acyl-carrier-protein] synthase (119 aa).

Mg(2+) contacts are provided by aspartate 8 and glutamate 50.

The protein belongs to the P-Pant transferase superfamily. AcpS family. The cofactor is Mg(2+).

The protein localises to the cytoplasm. The catalysed reaction is apo-[ACP] + CoA = holo-[ACP] + adenosine 3',5'-bisphosphate + H(+). Transfers the 4'-phosphopantetheine moiety from coenzyme A to a Ser of acyl-carrier-protein. This is Holo-[acyl-carrier-protein] synthase from Clavibacter sepedonicus (Clavibacter michiganensis subsp. sepedonicus).